The following is a 180-amino-acid chain: Pro-glucagon (180 aa).

An N-terminal signal peptide occupies residues 1–20; the sequence is MKTVYIVAGLFVMLVQGSWQ. The disordered stretch occupies residues 23-59; it reads PQDTEENARSFPASQTEPLEDPDQINEDKRHSQGTFT. Residue serine 54 is modified to Phosphoserine. A propeptide spanning residues 84-89 is cleaved from the precursor; that stretch reads NRNNIA. A phosphoserine mark is found at serine 105 and serine 108. Arginine 127 carries the post-translational modification Arginine amide. Positions 131–145 are excised as a propeptide; sequence DFPEEVAIAEELGRR. Residues serine 150 and serine 152 each carry the phosphoserine modification.

The protein belongs to the glucagon family. Proglucagon is post-translationally processed in a tissue-specific manner in pancreatic A cells and intestinal L cells. In pancreatic A cells, the major bioactive hormone is glucagon cleaved by PCSK2/PC2. In the intestinal L cells PCSK1/PC1 liberates GLP-1, GLP-2, glicentin and oxyntomodulin. GLP-1 is further N-terminally truncated by post-translational processing in the intestinal L cells resulting in GLP-1(7-37) GLP-1-(7-36)amide. The C-terminal amidation is neither important for the metabolism of GLP-1 nor for its effects on the endocrine pancreas. Glucagon is secreted in the A cells of the islets of Langerhans. GLP-1, GLP-2, oxyntomodulin and glicentin are secreted from enteroendocrine cells throughout the gastrointestinal tract.

The protein localises to the secreted. Plays a key role in glucose metabolism and homeostasis. Regulates blood glucose by increasing gluconeogenesis and decreasing glycolysis. A counterregulatory hormone of insulin, raises plasma glucose levels in response to insulin-induced hypoglycemia. Plays an important role in initiating and maintaining hyperglycemic conditions in diabetes. In terms of biological role, potent stimulator of glucose-dependent insulin release. Also stimulates insulin release in response to IL6. Plays important roles on gastric motility and the suppression of plasma glucagon levels. May be involved in the suppression of satiety and stimulation of glucose disposal in peripheral tissues, independent of the actions of insulin. Has growth-promoting activities on intestinal epithelium. May also regulate the hypothalamic pituitary axis (HPA) via effects on LH, TSH, CRH, oxytocin, and vasopressin secretion. Increases islet mass through stimulation of islet neogenesis and pancreatic beta cell proliferation. Inhibits beta cell apoptosis. Functionally, stimulates intestinal growth and up-regulates villus height in the small intestine, concomitant with increased crypt cell proliferation and decreased enterocyte apoptosis. The gastrointestinal tract, from the stomach to the colon is the principal target for GLP-2 action. Plays a key role in nutrient homeostasis, enhancing nutrient assimilation through enhanced gastrointestinal function, as well as increasing nutrient disposal. Stimulates intestinal glucose transport and decreases mucosal permeability. Its function is as follows. May modulate gastric acid secretion and the gastro-pyloro-duodenal activity. May play an important role in intestinal mucosal growth in the early period of life. Oxyntomodulin significantly reduces food intake. This chain is Pro-glucagon (Gcg), found in Rattus norvegicus (Rat).